A 451-amino-acid chain; its full sequence is Signal transduction histidine-protein kinase ArlS (451 aa).

2 helical membrane-spanning segments follow: residues 11–31 and 156–176; these read IIVT…IIIF and IIAL…SYVF. The HAMP domain maps to 178-231; it reads TQITKPLVSLSNKMIEIRRDGFQNKLQLNTNYEEIDNLANTFNEMMSQIEESFN. A Histidine kinase domain is found at 239 to 451; it reads DASHELRTPL…NKGTTFKIIF (213 aa). His-242 carries the post-translational modification Phosphohistidine; by autocatalysis.

Autophosphorylated.

The protein localises to the cell membrane. It catalyses the reaction ATP + protein L-histidine = ADP + protein N-phospho-L-histidine.. In terms of biological role, member of the two-component regulatory system ArlS/ArlR involved in the regulation of adhesion, autolysis, multidrug resistance and virulence. ArlS probably functions as a sensor protein kinase which is autophosphorylated at a histidine residue and transfers its phosphate group to ArlR. The polypeptide is Signal transduction histidine-protein kinase ArlS (arlS) (Staphylococcus aureus (strain MRSA252)).